The chain runs to 93 residues: Small ribosomal subunit protein uS19 (93 aa).

This sequence belongs to the universal ribosomal protein uS19 family.

In terms of biological role, protein S19 forms a complex with S13 that binds strongly to the 16S ribosomal RNA. This chain is Small ribosomal subunit protein uS19, found in Ehrlichia ruminantium (strain Welgevonden).